A 101-amino-acid chain; its full sequence is Small ribosomal subunit protein uS14 (101 aa).

It belongs to the universal ribosomal protein uS14 family. Part of the 30S ribosomal subunit. Contacts proteins S3 and S10.

Its function is as follows. Binds 16S rRNA, required for the assembly of 30S particles and may also be responsible for determining the conformation of the 16S rRNA at the A site. The polypeptide is Small ribosomal subunit protein uS14 (Psychrobacter arcticus (strain DSM 17307 / VKM B-2377 / 273-4)).